A 421-amino-acid polypeptide reads, in one-letter code: UDP-N-acetylglucosamine 1-carboxyvinyltransferase (421 aa).

22–23 contacts phosphoenolpyruvate; that stretch reads KN. Residue R93 coordinates UDP-N-acetyl-alpha-D-glucosamine. C117 functions as the Proton donor in the catalytic mechanism. Position 117 is a 2-(S-cysteinyl)pyruvic acid O-phosphothioketal (C117). Residues 122-126, D308, and I330 each bind UDP-N-acetyl-alpha-D-glucosamine; that span reads RPVDL.

The protein belongs to the EPSP synthase family. MurA subfamily.

The protein localises to the cytoplasm. The enzyme catalyses phosphoenolpyruvate + UDP-N-acetyl-alpha-D-glucosamine = UDP-N-acetyl-3-O-(1-carboxyvinyl)-alpha-D-glucosamine + phosphate. It functions in the pathway cell wall biogenesis; peptidoglycan biosynthesis. In terms of biological role, cell wall formation. Adds enolpyruvyl to UDP-N-acetylglucosamine. This Pseudomonas savastanoi pv. phaseolicola (strain 1448A / Race 6) (Pseudomonas syringae pv. phaseolicola (strain 1448A / Race 6)) protein is UDP-N-acetylglucosamine 1-carboxyvinyltransferase.